Reading from the N-terminus, the 301-residue chain is Oxygen-dependent coproporphyrinogen-III oxidase (301 aa).

Ser94 contributes to the substrate binding site. His98 and His108 together coordinate a divalent metal cation. Catalysis depends on His108, which acts as the Proton donor. 110-112 (NVR) contributes to the substrate binding site. 2 residues coordinate a divalent metal cation: His147 and His177. Residues 242–277 (YVEFNLVYDRGTLFGLQSGGRTESILMSMPPLARWE) form an important for dimerization region. 260 to 262 (GGR) contributes to the substrate binding site.

Belongs to the aerobic coproporphyrinogen-III oxidase family. Homodimer. It depends on a divalent metal cation as a cofactor.

It localises to the cytoplasm. The catalysed reaction is coproporphyrinogen III + O2 + 2 H(+) = protoporphyrinogen IX + 2 CO2 + 2 H2O. The protein operates within porphyrin-containing compound metabolism; protoporphyrin-IX biosynthesis; protoporphyrinogen-IX from coproporphyrinogen-III (O2 route): step 1/1. Involved in the heme biosynthesis. Catalyzes the aerobic oxidative decarboxylation of propionate groups of rings A and B of coproporphyrinogen-III to yield the vinyl groups in protoporphyrinogen-IX. The chain is Oxygen-dependent coproporphyrinogen-III oxidase from Photobacterium profundum (strain SS9).